Consider the following 671-residue polypeptide: DNA ligase (671 aa).

NAD(+) is bound by residues 32–36 (DAEYD), 81–82 (SL), and E113. The active-site N6-AMP-lysine intermediate is the K115. NAD(+)-binding residues include R136, E173, K290, and K314. Zn(2+)-binding residues include C408, C411, C426, and C432. The region spanning 593-671 (EIDSPFAGKT…EAEMIRLLGA (79 aa)) is the BRCT domain.

Belongs to the NAD-dependent DNA ligase family. LigA subfamily. It depends on Mg(2+) as a cofactor. Mn(2+) is required as a cofactor.

The enzyme catalyses NAD(+) + (deoxyribonucleotide)n-3'-hydroxyl + 5'-phospho-(deoxyribonucleotide)m = (deoxyribonucleotide)n+m + AMP + beta-nicotinamide D-nucleotide.. DNA ligase that catalyzes the formation of phosphodiester linkages between 5'-phosphoryl and 3'-hydroxyl groups in double-stranded DNA using NAD as a coenzyme and as the energy source for the reaction. It is essential for DNA replication and repair of damaged DNA. This chain is DNA ligase, found in Salmonella paratyphi A (strain ATCC 9150 / SARB42).